We begin with the raw amino-acid sequence, 73 residues long: Translation initiation factor IF-1 (73 aa).

The S1-like domain occupies 1–73; that stretch reads MAKKDGVIEI…TRGRIVYRYK (73 aa).

The protein belongs to the IF-1 family. Component of the 30S ribosomal translation pre-initiation complex which assembles on the 30S ribosome in the order IF-2 and IF-3, IF-1 and N-formylmethionyl-tRNA(fMet); mRNA recruitment can occur at any time during PIC assembly.

The protein localises to the cytoplasm. One of the essential components for the initiation of protein synthesis. Stabilizes the binding of IF-2 and IF-3 on the 30S subunit to which N-formylmethionyl-tRNA(fMet) subsequently binds. Helps modulate mRNA selection, yielding the 30S pre-initiation complex (PIC). Upon addition of the 50S ribosomal subunit IF-1, IF-2 and IF-3 are released leaving the mature 70S translation initiation complex. The polypeptide is Translation initiation factor IF-1 (Clavibacter michiganensis subsp. michiganensis (strain NCPPB 382)).